The chain runs to 78 residues: Putative snRNP Sm-like protein (78 aa).

One can recognise a Sm domain in the interval 4–76 (RPLDVIHRSL…VLAISPVDVG (73 aa)).

Belongs to the snRNP Sm proteins family.

In Thermococcus onnurineus (strain NA1), this protein is Putative snRNP Sm-like protein.